Reading from the N-terminus, the 206-residue chain is MDFINRTTPEIAKDLLGVKLIFDDGENQFSGYIVETEAYLGKIDEAAHSYNGRQTPRVQSMYKDGGTIYAHVMHTHLLINLVTQPAGTAEGVLIRALEPELITDQMIENRNGKVGIDVTNGPGKWTRAFNMSMALDGLRLNEGPLSIDTKARKYPSSILESPRIGVPNKGEWTHKPLRFTVEGNPYVSRMRKSDMLAAEDTWKKHK.

This sequence belongs to the DNA glycosylase MPG family.

The polypeptide is Putative 3-methyladenine DNA glycosylase (Staphylococcus carnosus (strain TM300)).